A 338-amino-acid polypeptide reads, in one-letter code: Heat-inducible transcription repressor HrcA (338 aa).

Belongs to the HrcA family.

Its function is as follows. Negative regulator of class I heat shock genes (grpE-dnaK-dnaJ and groELS operons). Prevents heat-shock induction of these operons. This chain is Heat-inducible transcription repressor HrcA, found in Bacillus cereus (strain B4264).